A 381-amino-acid polypeptide reads, in one-letter code: Selenoprotein P (381 aa).

A signal peptide spans 1 to 19 (MWRSLGLALALCLLPSGGT). N46 is a glycosylation site (N-linked (GlcNAc...) asparagine). U59 is a non-standard amino acid (selenocysteine). N-linked (GlcNAc...) (complex) asparagine glycosylation occurs at N83. Residues N119, N128, and N174 are each glycosylated (N-linked (GlcNAc...) asparagine). Residues 200-268 (TPSPHYHHEH…ENRDMPASED (69 aa)) form a disordered region. Residues 204–216 (HYHHEHHHNHGHQ) are compositionally biased toward basic residues. Polar residues predominate over residues 218–230 (LGSSELSENQQPG). A compositionally biased stretch (basic residues) spans 243 to 255 (LHHHHKHKGQHRQ). A Phosphoserine modification is found at S266. Residues U300, U318, and U330 are each a non-standard amino acid (selenocysteine). A glycan (N-linked (GlcNAc...) asparagine) is linked at N338. Residues U345, U352, U367, U369, U376, and U378 are each a non-standard amino acid (selenocysteine). A disordered region spans residues 355 to 381 (SQQLIPTEASASURUKNQAKKUEUPSN).

It belongs to the selenoprotein P family. Post-translationally, phosphorylation sites are present in the extracellular medium. As to expression, made in the liver and heart and secreted into the plasma. It is also found in the kidney.

Its subcellular location is the secreted. In terms of biological role, might be responsible for some of the extracellular antioxidant defense properties of selenium or might be involved in the transport of selenium. May supply selenium to tissues such as brain and testis. This Homo sapiens (Human) protein is Selenoprotein P.